The sequence spans 450 residues: Trigger factor (450 aa).

One can recognise a PPIase FKBP-type domain in the interval 163–249 (EDFVLIDYQG…LKEIQEQILP (87 aa)). The span at 431-443 (PEVETEVSESAAD) shows a compositional bias: acidic residues. The tract at residues 431 to 450 (PEVETEVSESAADVEDKTDQ) is disordered.

It belongs to the FKBP-type PPIase family. Tig subfamily.

The protein resides in the cytoplasm. The catalysed reaction is [protein]-peptidylproline (omega=180) = [protein]-peptidylproline (omega=0). Its function is as follows. Involved in protein export. Acts as a chaperone by maintaining the newly synthesized protein in an open conformation. Functions as a peptidyl-prolyl cis-trans isomerase. The protein is Trigger factor of Desulforapulum autotrophicum (strain ATCC 43914 / DSM 3382 / VKM B-1955 / HRM2) (Desulfobacterium autotrophicum).